A 397-amino-acid polypeptide reads, in one-letter code: Endoglucanase (397 aa).

Glu-194 serves as the catalytic Proton donor. Glu-317 (nucleophile) is an active-site residue.

The protein belongs to the glycosyl hydrolase 5 (cellulase A) family.

It catalyses the reaction Endohydrolysis of (1-&gt;4)-beta-D-glucosidic linkages in cellulose, lichenin and cereal beta-D-glucans.. The sequence is that of Endoglucanase from Paenibacillus polymyxa (Bacillus polymyxa).